A 179-amino-acid polypeptide reads, in one-letter code: Ribosome maturation factor RimM (179 aa).

The region spanning 95–174 is the PRC barrel domain; that stretch reads KDEFFYFDIL…QIFCTQDAFL (80 aa).

The protein belongs to the RimM family. Binds ribosomal protein uS19.

Its subcellular location is the cytoplasm. Functionally, an accessory protein needed during the final step in the assembly of 30S ribosomal subunit, possibly for assembly of the head region. Essential for efficient processing of 16S rRNA. May be needed both before and after RbfA during the maturation of 16S rRNA. It has affinity for free ribosomal 30S subunits but not for 70S ribosomes. The polypeptide is Ribosome maturation factor RimM (Campylobacter jejuni subsp. jejuni serotype O:6 (strain 81116 / NCTC 11828)).